Here is an 838-residue protein sequence, read N- to C-terminus: Probable inorganic carbon transporter subunit DabA (838 aa).

Cysteine 353, aspartate 355, histidine 537, and cysteine 552 together coordinate Zn(2+).

It belongs to the inorganic carbon transporter (TC 9.A.2) DabA family. In terms of assembly, forms a complex with DabB. Zn(2+) serves as cofactor.

It is found in the cell membrane. Functionally, part of an energy-coupled inorganic carbon pump. This Chloroflexus aurantiacus (strain ATCC 29366 / DSM 635 / J-10-fl) protein is Probable inorganic carbon transporter subunit DabA.